The following is a 101-amino-acid chain: Ubiquitin-related modifier 1 homolog (101 aa).

Position 101 is a 1-thioglycine (glycine 101). Glycine 101 is covalently cross-linked (Glycyl lysine isopeptide (Gly-Lys) (interchain with K-? in acceptor proteins)).

Belongs to the URM1 family. Interacts with cer. C-terminal thiocarboxylation occurs in 2 steps, it is first acyl-adenylated (-COAMP) via the hesA/moeB/thiF part of the MOCS3 homolog, then thiocarboxylated (-COSH) via the rhodanese domain of the MOCS3 homolog.

Its subcellular location is the cytoplasm. The protein operates within tRNA modification; 5-methoxycarbonylmethyl-2-thiouridine-tRNA biosynthesis. In terms of biological role, acts as a sulfur carrier required for 2-thiolation of mcm(5)S(2)U at tRNA wobble positions of cytosolic tRNA(Lys), tRNA(Glu) and tRNA(Gln). Serves as sulfur donor in tRNA 2-thiolation reaction by being thiocarboxylated (-COSH) at its C-terminus by MOCS3. The sulfur is then transferred to tRNA to form 2-thiolation of mcm(5)S(2)U. Also acts as a ubiquitin-like protein (UBL) that is covalently conjugated via an isopeptide bond to lysine residues of target proteins such as Prx2/Jafrac1, Ciao1, Eip71CD and GILT1. The thiocarboxylated form serves as substrate for conjugation and oxidative stress specifically induces the formation of UBL-protein conjugates. The sequence is that of Ubiquitin-related modifier 1 homolog from Drosophila sechellia (Fruit fly).